Reading from the N-terminus, the 166-residue chain is Cyclic pyranopterin monophosphate synthase (166 aa).

Substrate contacts are provided by residues 83 to 85 (LCH) and 121 to 122 (ME). Asp136 is a catalytic residue.

This sequence belongs to the MoaC family. Homohexamer; trimer of dimers.

The catalysed reaction is (8S)-3',8-cyclo-7,8-dihydroguanosine 5'-triphosphate = cyclic pyranopterin phosphate + diphosphate. The protein operates within cofactor biosynthesis; molybdopterin biosynthesis. Functionally, catalyzes the conversion of (8S)-3',8-cyclo-7,8-dihydroguanosine 5'-triphosphate to cyclic pyranopterin monophosphate (cPMP). This is Cyclic pyranopterin monophosphate synthase from Rhodospirillum rubrum (strain ATCC 11170 / ATH 1.1.1 / DSM 467 / LMG 4362 / NCIMB 8255 / S1).